The following is a 145-amino-acid chain: UPF0763 protein CFF8240_1572 (145 aa).

Belongs to the UPF0763 family.

This Campylobacter fetus subsp. fetus (strain 82-40) protein is UPF0763 protein CFF8240_1572.